We begin with the raw amino-acid sequence, 205 residues long: DNA-directed RNA polymerase RPB5 homolog (205 aa).

Belongs to the archaeal RpoH/eukaryotic RPB5 RNA polymerase subunit family. As to quaternary structure, part of the viral DNA-directed RNA polymerase that consists of 8 polII-like subunits (RPB1, RPB2, RPB3, RPB5, RPB6, RPB7, RPB9, RPB10), a capping enzyme and a termination factor.

It localises to the host cytoplasm. The protein resides in the virion. Functionally, component of the DNA-directed RNA polymerase (RNAP) that catalyzes the transcription in the cytoplasm of viral DNA into RNA using the four ribonucleoside triphosphates as substrates. This Ornithodoros (relapsing fever ticks) protein is DNA-directed RNA polymerase RPB5 homolog.